The sequence spans 293 residues: Amine sulfotransferase (293 aa).

Position 46 to 51 (46 to 51 (KSGTIW)) interacts with 3'-phosphoadenylyl sulfate. His101 acts as the Proton acceptor in catalysis. Residues Arg123, Ser131, 220–225 (ATFQKM), and 252–254 (RKG) contribute to the 3'-phosphoadenylyl sulfate site.

It belongs to the sulfotransferase 1 family.

It localises to the cytoplasm. It carries out the reaction a primary amine + 3'-phosphoadenylyl sulfate = a sulfamate + adenosine 3',5'-bisphosphate + 2 H(+). In terms of biological role, sulfotransferase that utilizes 3'-phospho-5'-adenylyl sulfate (PAPS) as sulfonate donor to catalyze the N-sulfonation of amines. In Mus musculus (Mouse), this protein is Amine sulfotransferase (Sult3a1).